A 458-amino-acid polypeptide reads, in one-letter code: V-type sodium ATPase subunit B (458 aa).

Belongs to the ATPase alpha/beta chains family.

Involved in ATP-driven sodium extrusion. The chain is V-type sodium ATPase subunit B (ntpB) from Enterococcus hirae (strain ATCC 9790 / DSM 20160 / JCM 8729 / LMG 6399 / NBRC 3181 / NCIMB 6459 / NCDO 1258 / NCTC 12367 / WDCM 00089 / R).